The primary structure comprises 372 residues: MRSIIADSKRLVVKVGSSLVTNDGKGLDHAAIGRWAAQIAALRAQGKEVVLVSSGAIAEGMQRLGWSKRPREIDELQAAAAVGQMGLAQVYESRFTEHDIRTAQILLTHADLADRERYLNARSTMLTLLRLGVVPIINENDTVVTDEIKFGDNDTLGALVANLIEGDALIILTDQSGLFTADPRKDPNATLVAEANAGAPELEAMAGGAGSSLGRGGMLTKILAAKRAAHSGANTVIASGRETDVLVRLAAGEAIGTQLIARTARMAARKQWMADHLQVRGHVVIDAGAVEKLTAGGKSLLPIGVIDVQGAFARGEVIACVGPDGREVARGLTNYSSAETKLIHRKPSGEIESVLGYMLEPELIHRDNLVLV.

ATP is bound at residue Lys14. 3 residues coordinate substrate: Ser54, Asp141, and Asn153. 173–174 (TD) is an ATP binding site. One can recognise a PUA domain in the interval 280-358 (RGHVVIDAGA…GEIESVLGYM (79 aa)).

This sequence belongs to the glutamate 5-kinase family.

It localises to the cytoplasm. The catalysed reaction is L-glutamate + ATP = L-glutamyl 5-phosphate + ADP. The protein operates within amino-acid biosynthesis; L-proline biosynthesis; L-glutamate 5-semialdehyde from L-glutamate: step 1/2. Functionally, catalyzes the transfer of a phosphate group to glutamate to form L-glutamate 5-phosphate. This is Glutamate 5-kinase from Burkholderia lata (strain ATCC 17760 / DSM 23089 / LMG 22485 / NCIMB 9086 / R18194 / 383).